The chain runs to 437 residues: Methylenetetrahydrofolate--tRNA-(uracil-5-)-methyltransferase TrmFO (437 aa).

8–13 (GAGLAG) contributes to the FAD binding site.

The protein belongs to the MnmG family. TrmFO subfamily. It depends on FAD as a cofactor.

It localises to the cytoplasm. It catalyses the reaction uridine(54) in tRNA + (6R)-5,10-methylene-5,6,7,8-tetrahydrofolate + NADH + H(+) = 5-methyluridine(54) in tRNA + (6S)-5,6,7,8-tetrahydrofolate + NAD(+). The catalysed reaction is uridine(54) in tRNA + (6R)-5,10-methylene-5,6,7,8-tetrahydrofolate + NADPH + H(+) = 5-methyluridine(54) in tRNA + (6S)-5,6,7,8-tetrahydrofolate + NADP(+). Catalyzes the folate-dependent formation of 5-methyl-uridine at position 54 (M-5-U54) in all tRNAs. In Desulfitobacterium hafniense (strain Y51), this protein is Methylenetetrahydrofolate--tRNA-(uracil-5-)-methyltransferase TrmFO.